The following is a 265-amino-acid chain: 4-hydroxy-tetrahydrodipicolinate reductase (265 aa).

Residues G7 to M12, D33, G96 to T98, and A120 to M123 each bind NAD(+). The active-site Proton donor/acceptor is H153. Residue H154 coordinates (S)-2,3,4,5-tetrahydrodipicolinate. The Proton donor role is filled by K157. Residue G163–T164 coordinates (S)-2,3,4,5-tetrahydrodipicolinate.

The protein belongs to the DapB family.

The protein resides in the cytoplasm. The catalysed reaction is (S)-2,3,4,5-tetrahydrodipicolinate + NAD(+) + H2O = (2S,4S)-4-hydroxy-2,3,4,5-tetrahydrodipicolinate + NADH + H(+). It catalyses the reaction (S)-2,3,4,5-tetrahydrodipicolinate + NADP(+) + H2O = (2S,4S)-4-hydroxy-2,3,4,5-tetrahydrodipicolinate + NADPH + H(+). Its pathway is amino-acid biosynthesis; L-lysine biosynthesis via DAP pathway; (S)-tetrahydrodipicolinate from L-aspartate: step 4/4. Its function is as follows. Catalyzes the conversion of 4-hydroxy-tetrahydrodipicolinate (HTPA) to tetrahydrodipicolinate. In Cupriavidus metallidurans (strain ATCC 43123 / DSM 2839 / NBRC 102507 / CH34) (Ralstonia metallidurans), this protein is 4-hydroxy-tetrahydrodipicolinate reductase.